A 61-amino-acid polypeptide reads, in one-letter code: Small ribosomal subunit protein uS14 (61 aa).

Residues cysteine 24, cysteine 27, cysteine 40, and cysteine 43 each contribute to the Zn(2+) site.

This sequence belongs to the universal ribosomal protein uS14 family. Zinc-binding uS14 subfamily. As to quaternary structure, part of the 30S ribosomal subunit. Contacts proteins S3 and S10. It depends on Zn(2+) as a cofactor.

Binds 16S rRNA, required for the assembly of 30S particles and may also be responsible for determining the conformation of the 16S rRNA at the A site. The polypeptide is Small ribosomal subunit protein uS14 (Desulfitobacterium hafniense (strain Y51)).